Consider the following 168-residue polypeptide: CASP-like protein 4D1 (168 aa).

Residues 1-11 (MAPPPPSLASR) lie on the Cytoplasmic side of the membrane. The helical transmembrane segment at 12-32 (MAALILRILTFIFLIASLVIL) threads the bilayer. The Extracellular segment spans residues 33–57 (TTNTATLELDLVEVKVHFKDVYAYR). Residues 58-78 (YMLATIVIGLAYTVLQIAFTL) form a helical membrane-spanning segment. The Cytoplasmic segment spans residues 79 to 97 (YYVATGNRMMSGDGNLAFD). Residues 98 to 118 (FFGDKVISYILVTGAAAGFAS) traverse the membrane as a helical segment. Topologically, residues 119–144 (TKDIKPVFSGSGDFDAFINKGYASAS) are extracellular. A helical transmembrane segment spans residues 145–165 (LLLIGFVCTAVLSVFSSYALP). Residues 166 to 168 (KQV) lie on the Cytoplasmic side of the membrane.

This sequence belongs to the Casparian strip membrane proteins (CASP) family. In terms of assembly, homodimer and heterodimers.

The protein resides in the cell membrane. The chain is CASP-like protein 4D1 from Ricinus communis (Castor bean).